The chain runs to 626 residues: Elongation factor 4 (626 aa).

Positions 14 to 195 (SVIRNFCIIA…QIVMDVPAPH (182 aa)) constitute a tr-type G domain. GTP is bound by residues 26 to 31 (DHGKST) and 142 to 145 (NKID). The interval 603 to 626 (LSTGEDSNDRDTKDKIRAAQKTEG) is disordered. Positions 609–626 (SNDRDTKDKIRAAQKTEG) are enriched in basic and acidic residues.

The protein belongs to the TRAFAC class translation factor GTPase superfamily. Classic translation factor GTPase family. LepA subfamily.

Its subcellular location is the cell membrane. It catalyses the reaction GTP + H2O = GDP + phosphate + H(+). In terms of biological role, required for accurate and efficient protein synthesis under certain stress conditions. May act as a fidelity factor of the translation reaction, by catalyzing a one-codon backward translocation of tRNAs on improperly translocated ribosomes. Back-translocation proceeds from a post-translocation (POST) complex to a pre-translocation (PRE) complex, thus giving elongation factor G a second chance to translocate the tRNAs correctly. Binds to ribosomes in a GTP-dependent manner. This chain is Elongation factor 4, found in Bifidobacterium longum subsp. infantis (strain ATCC 15697 / DSM 20088 / JCM 1222 / NCTC 11817 / S12).